Reading from the N-terminus, the 236-residue chain is Small ribosomal subunit protein uS2c (236 aa).

This sequence belongs to the universal ribosomal protein uS2 family.

It is found in the plastid. Its subcellular location is the chloroplast. This Populus alba (White poplar) protein is Small ribosomal subunit protein uS2c (rps2).